Reading from the N-terminus, the 893-residue chain is Dolichyl-phosphate-mannose--protein mannosyltransferase 1 (893 aa).

The next 7 helical transmembrane spans lie at 29–49 (FSFL…CVRA), 77–97 (LLMD…AALT), 124–144 (LFTC…VYFP), 147–167 (SKTA…LITM), 170–190 (YIMI…YWSV), 224–244 (AMFT…NLLG), and 258–278 (FSYI…VFAV). Positions 310 to 364 (FADVAYGSLVTIRNAIPEHGYLHSSELLYPEGTEQQIISLVDEPNQNALWIIEHE) constitute an MIR 1 domain. Asn370 carries N-linked (GlcNAc...) asparagine glycosylation. 2 consecutive MIR domains span residues 374-433 (IELL…IQIL) and 443-499 (NGTV…IESN). Asn443 carries an N-linked (GlcNAc...) asparagine glycan. Phosphothreonine is present on Thr451. Transmembrane regions (helical) follow at residues 573–593 (FVWY…IFCL), 610–630 (YNYN…PYIL), and 643–663 (ALYF…NAVF). Residue Asn665 is glycosylated (N-linked (GlcNAc...) asparagine). Residues 671–691 (ALSVIIMALMFLVYRLYSPFT) traverse the membrane as a helical segment. The N-linked (GlcNAc...) asparagine glycan is linked to Asn720. Residues 785 to 893 (KAEQEAREAA…VAESAQARVE (109 aa)) are disordered. A compositionally biased stretch (basic and acidic residues) spans 786–806 (AEQEAREAAEKAASEAAERSS). Composition is skewed to low complexity over residues 807–823 (SEAA…AASV) and 854–864 (MEAAALNNAAE). Positions 868–878 (VVGSSPESVAS) are enriched in polar residues.

The protein belongs to the glycosyltransferase 39 family.

Its subcellular location is the endoplasmic reticulum membrane. The protein resides in the nucleus membrane. The catalysed reaction is a di-trans,poly-cis-dolichyl beta-D-mannosyl phosphate + L-seryl-[protein] = 3-O-(alpha-D-mannosyl)-L-seryl-[protein] + a di-trans,poly-cis-dolichyl phosphate + H(+). It carries out the reaction a di-trans,poly-cis-dolichyl beta-D-mannosyl phosphate + L-threonyl-[protein] = 3-O-(alpha-D-mannosyl)-L-threonyl-[protein] + a di-trans,poly-cis-dolichyl phosphate + H(+). Its pathway is protein modification; protein glycosylation. Functionally, transfers mannose from Dol-P-mannose to Ser or Thr residues on proteins. Required for normal cell growth and septum formation. Shown to actively O-mannosylate wsc1. This chain is Dolichyl-phosphate-mannose--protein mannosyltransferase 1 (ogm1), found in Schizosaccharomyces pombe (strain 972 / ATCC 24843) (Fission yeast).